A 213-amino-acid chain; its full sequence is MAVLSAPGLRGFRILGLRSSVGPAVQARGVHQSVATDGPSSTQPALPKARAVAPKPSSRGEYVVAKLDDLVNWARRSSLWPMTFGLACCAVEMMHMAAPRYDMDRFGVVFRASPRQSDVMIVAGTLTNKMAPALRKVYDQMPEPRYVVSMGSCANGGGYYHYSYSVVRGCDRIVPVDIYIPGCPPTAEALLYGILQLQRKIKRERRLQIWYRR.

Residues 1–38 (MAVLSAPGLRGFRILGLRSSVGPAVQARGVHQSVATDG) constitute a mitochondrion transit peptide. A disordered region spans residues 31–53 (HQSVATDGPSSTQPALPKARAVA). Over residues 33 to 44 (SVATDGPSSTQP) the composition is skewed to polar residues. Residues cysteine 88 and cysteine 89 each contribute to the [4Fe-4S] cluster site. The residue at position 111 (arginine 111) is a Hydroxyarginine. Cysteine 153 and cysteine 183 together coordinate [4Fe-4S] cluster.

This sequence belongs to the complex I 20 kDa subunit family. In terms of assembly, core subunit of respiratory chain NADH dehydrogenase (Complex I) which is composed of 45 different subunits. This is a component of the iron-sulfur (IP) fragment of the enzyme. It depends on [4Fe-4S] cluster as a cofactor. In terms of processing, hydroxylated at Arg-111 by NDUFAF5 early in the pathway of assembly of complex I, before the formation of the juncture between peripheral and membrane arms.

It localises to the mitochondrion inner membrane. The enzyme catalyses a ubiquinone + NADH + 5 H(+)(in) = a ubiquinol + NAD(+) + 4 H(+)(out). Its function is as follows. Core subunit of the mitochondrial membrane respiratory chain NADH dehydrogenase (Complex I) which catalyzes electron transfer from NADH through the respiratory chain, using ubiquinone as an electron acceptor. Essential for the catalytic activity of complex I. The protein is NADH dehydrogenase [ubiquinone] iron-sulfur protein 7, mitochondrial (NDUFS7) of Homo sapiens (Human).